The chain runs to 115 residues: UPF0342 protein Bsph_0375 (115 aa).

It belongs to the UPF0342 family.

The sequence is that of UPF0342 protein Bsph_0375 from Lysinibacillus sphaericus (strain C3-41).